A 120-amino-acid chain; its full sequence is Small ribosomal subunit protein bS16 (120 aa).

The interval 80–120 (GLKKRPARNNPHKGEPGKKAQERIAAAKQAAEDAKAAEASA) is disordered. Positions 81–90 (LKKRPARNNP) are enriched in basic residues. Composition is skewed to basic and acidic residues over residues 91–101 (HKGEPGKKAQE) and 109–120 (AAEDAKAAEASA).

Belongs to the bacterial ribosomal protein bS16 family.

This Bartonella bacilliformis (strain ATCC 35685 / KC583 / Herrer 020/F12,63) protein is Small ribosomal subunit protein bS16.